The primary structure comprises 158 residues: Probable inactive acireductone dioxygenase 2 (158 aa).

The protein belongs to the acireductone dioxygenase (ARD) family.

The protein resides in the cytoplasm. The protein localises to the nucleus. Functionally, probable inactive acireductone dioxygenase. In Caenorhabditis elegans, this protein is Probable inactive acireductone dioxygenase 2.